A 352-amino-acid polypeptide reads, in one-letter code: Holliday junction branch migration complex subunit RuvB (352 aa).

Positions 13–201 (FSLRKKELRL…FGISQKIEFY (189 aa)) are large ATPase domain (RuvB-L). Residues Arg-41, Gly-82, Lys-85, Thr-86, Thr-87, 148-150 (EDF), Arg-191, Tyr-201, and Arg-238 contribute to the ATP site. A Mg(2+)-binding site is contributed by Thr-86. The tract at residues 202-273 (TCDELKQIID…LIKKALNSYQ (72 aa)) is small ATPAse domain (RuvB-S). The tract at residues 276 to 352 (EKGLDYVDRQ…KYIDSKNDNF (77 aa)) is head domain (RuvB-H). DNA contacts are provided by Arg-330 and Arg-335.

Belongs to the RuvB family. As to quaternary structure, homohexamer. Forms an RuvA(8)-RuvB(12)-Holliday junction (HJ) complex. HJ DNA is sandwiched between 2 RuvA tetramers; dsDNA enters through RuvA and exits via RuvB. An RuvB hexamer assembles on each DNA strand where it exits the tetramer. Each RuvB hexamer is contacted by two RuvA subunits (via domain III) on 2 adjacent RuvB subunits; this complex drives branch migration. In the full resolvosome a probable DNA-RuvA(4)-RuvB(12)-RuvC(2) complex forms which resolves the HJ.

It localises to the cytoplasm. The catalysed reaction is ATP + H2O = ADP + phosphate + H(+). In terms of biological role, the RuvA-RuvB-RuvC complex processes Holliday junction (HJ) DNA during genetic recombination and DNA repair, while the RuvA-RuvB complex plays an important role in the rescue of blocked DNA replication forks via replication fork reversal (RFR). RuvA specifically binds to HJ cruciform DNA, conferring on it an open structure. The RuvB hexamer acts as an ATP-dependent pump, pulling dsDNA into and through the RuvAB complex. RuvB forms 2 homohexamers on either side of HJ DNA bound by 1 or 2 RuvA tetramers; 4 subunits per hexamer contact DNA at a time. Coordinated motions by a converter formed by DNA-disengaged RuvB subunits stimulates ATP hydrolysis and nucleotide exchange. Immobilization of the converter enables RuvB to convert the ATP-contained energy into a lever motion, pulling 2 nucleotides of DNA out of the RuvA tetramer per ATP hydrolyzed, thus driving DNA branch migration. The RuvB motors rotate together with the DNA substrate, which together with the progressing nucleotide cycle form the mechanistic basis for DNA recombination by continuous HJ branch migration. Branch migration allows RuvC to scan DNA until it finds its consensus sequence, where it cleaves and resolves cruciform DNA. The sequence is that of Holliday junction branch migration complex subunit RuvB from Prochlorococcus marinus (strain MIT 9312).